Reading from the N-terminus, the 963-residue chain is Bifunctional glutamine synthetase adenylyltransferase/adenylyl-removing enzyme (963 aa).

Residues 1–453 (MLTTLIPLSQ…IFNEIIGEEE (453 aa)) form an adenylyl removase region. The segment at 461-963 (VNEKLAEWKD…VREMWQRLLA (503 aa)) is adenylyl transferase.

It belongs to the GlnE family. It depends on Mg(2+) as a cofactor.

It carries out the reaction [glutamine synthetase]-O(4)-(5'-adenylyl)-L-tyrosine + phosphate = [glutamine synthetase]-L-tyrosine + ADP. The catalysed reaction is [glutamine synthetase]-L-tyrosine + ATP = [glutamine synthetase]-O(4)-(5'-adenylyl)-L-tyrosine + diphosphate. In terms of biological role, involved in the regulation of glutamine synthetase GlnA, a key enzyme in the process to assimilate ammonia. When cellular nitrogen levels are high, the C-terminal adenylyl transferase (AT) inactivates GlnA by covalent transfer of an adenylyl group from ATP to specific tyrosine residue of GlnA, thus reducing its activity. Conversely, when nitrogen levels are low, the N-terminal adenylyl removase (AR) activates GlnA by removing the adenylyl group by phosphorolysis, increasing its activity. The regulatory region of GlnE binds the signal transduction protein PII (GlnB) which indicates the nitrogen status of the cell. The polypeptide is Bifunctional glutamine synthetase adenylyltransferase/adenylyl-removing enzyme (Mannheimia haemolytica (Pasteurella haemolytica)).